We begin with the raw amino-acid sequence, 150 residues long: Large ribosomal subunit protein uL11 (150 aa).

It belongs to the universal ribosomal protein uL11 family. In terms of assembly, part of the ribosomal stalk of the 50S ribosomal subunit. Interacts with L10 and the large rRNA to form the base of the stalk. L10 forms an elongated spine to which L12 dimers bind in a sequential fashion forming a multimeric L10(L12)X complex. Post-translationally, one or more lysine residues are methylated.

Its function is as follows. Forms part of the ribosomal stalk which helps the ribosome interact with GTP-bound translation factors. This is Large ribosomal subunit protein uL11 from Ureaplasma urealyticum serovar 10 (strain ATCC 33699 / Western).